The primary structure comprises 192 residues: NF-kappa-B inhibitor-interacting Ras-like protein 1 (192 aa).

11–18 (GLLSVGKT) contributes to the GTP binding site. An Effector region motif is present at residues 35–43 (DCETLEDVY). Positions 58-93 (HLYDTRGLQKGVELPKHYFSFADGFVLVYSVNNLES) are interactions with NFKBIA and NFKBIB. Residues 61 to 65 (DTRGL) and 120 to 123 (NKLD) each bind GTP. A disordered region spans residues 168 to 192 (LSQPQSKSSFPLPGRKNKGNSNPEN).

This sequence belongs to the small GTPase superfamily. Ras family. KappaB-Ras subfamily. In terms of assembly, interacts with both NF-kappa-B inhibitor alpha (NFKBIA) and beta (NFKBIB) in vitro. However, it probably only interacts with NFKBIB in vivo. Forms a complex with NFKBIB and NF-kappa-B heterodimer (p50/NFKB1 and p65/RELA). Also interacts with c-Rel (REL).

The protein resides in the cytoplasm. Its function is as follows. Atypical Ras-like protein that acts as a potent regulator of NF-kappa-B activity by preventing the degradation of NF-kappa-B inhibitor beta (NFKBIB) by most signals, explaining why NFKBIB is more resistant to degradation. May act by blocking phosphorylation of NFKBIB and mediating cytoplasmic retention of p65/RELA NF-kappa-B subunit. It is unclear whether it acts as a GTPase. Both GTP- and GDP-bound forms block phosphorylation of NFKBIB. The protein is NF-kappa-B inhibitor-interacting Ras-like protein 1 (Nkiras1) of Mus musculus (Mouse).